Consider the following 233-residue polypeptide: 7-cyano-7-deazaguanine synthase (233 aa).

Residue 13–23 participates in ATP binding; the sequence is LSGGLDSATAM. Residues C197, C207, C210, and C213 each coordinate Zn(2+).

The protein belongs to the QueC family. Requires Zn(2+) as cofactor.

The catalysed reaction is 7-carboxy-7-deazaguanine + NH4(+) + ATP = 7-cyano-7-deazaguanine + ADP + phosphate + H2O + H(+). Its pathway is purine metabolism; 7-cyano-7-deazaguanine biosynthesis. Catalyzes the ATP-dependent conversion of 7-carboxy-7-deazaguanine (CDG) to 7-cyano-7-deazaguanine (preQ(0)). This Desulfatibacillum aliphaticivorans protein is 7-cyano-7-deazaguanine synthase.